Consider the following 386-residue polypeptide: Patatin-2-Kuras 2 (386 aa).

Residues 1–23 (MATTKSFLILFFMILATTSSTCA) form the signal peptide. The PNPLA domain occupies 32 to 229 (LSIDGGGIKG…TVGDPALLSL (198 aa)). The GXGXXG motif lies at 36 to 41 (GGGIKG). The short motif at 75 to 79 (GTSTG) is the GXSXG element. The active-site Nucleophile is the Ser77. N-linked (GlcNAc...) asparagine glycosylation occurs at Asn115. Asp215 (proton acceptor) is an active-site residue. Positions 215 to 217 (DGA) match the DGA/G motif. Residues 321–384 (ENALTGTTTE…DRKKLRANKA (64 aa)) are a coiled coil.

Belongs to the patatin family.

The protein localises to the vacuole. In terms of biological role, probable lipolytic acyl hydrolase (LAH), an activity which is thought to be involved in the response of tubers to pathogens. This chain is Patatin-2-Kuras 2 (pat2-k2), found in Solanum tuberosum (Potato).